The chain runs to 243 residues: Probable transcriptional regulatory protein BDU_30 (243 aa).

Belongs to the TACO1 family.

Its subcellular location is the cytoplasm. In Borrelia duttonii (strain Ly), this protein is Probable transcriptional regulatory protein BDU_30.